The primary structure comprises 182 residues: Adenine phosphoribosyltransferase (182 aa).

The protein belongs to the purine/pyrimidine phosphoribosyltransferase family. As to quaternary structure, homodimer.

It localises to the cytoplasm. It catalyses the reaction AMP + diphosphate = 5-phospho-alpha-D-ribose 1-diphosphate + adenine. It functions in the pathway purine metabolism; AMP biosynthesis via salvage pathway; AMP from adenine: step 1/1. Functionally, catalyzes a salvage reaction resulting in the formation of AMP, that is energically less costly than de novo synthesis. The protein is Adenine phosphoribosyltransferase of Pseudomonas fluorescens (strain Pf0-1).